Consider the following 928-residue polypeptide: Probable outer membrane protein pmp11 (928 aa).

The first 24 residues, 1–24 (MKTSIPWVLVSSVLAFSCHLQSLA), serve as a signal peptide directing secretion. Residues 627–928 (GMEHKQGFWV…NVDVGTKLRF (302 aa)) enclose the Autotransporter domain.

The protein belongs to the PMP outer membrane protein family.

The protein resides in the secreted. It localises to the cell wall. It is found in the cell outer membrane. The chain is Probable outer membrane protein pmp11 (pmp11) from Chlamydia pneumoniae (Chlamydophila pneumoniae).